A 734-amino-acid chain; its full sequence is MNSMKTEENKSFSAMEDDQRTRPEVSKDTVMKQTHADTPVDHCLSGIRKCSSTFKLKSEVNKHETALEMQNPNLNNKECCFTFTLNGNSRKLDRSVFTAYGKPSESIYSALSANDYFSERIKNQFNKNIIVYEEKTIDGHINLGMPLKCLPSDSHFKITFGQRKSSKEDGHILRQCENPNMECILFHVVAIGRTRKKIVKINELHEKGSKLCIYALKGETIEGALCKDGRFRSDIGEFEWKLKEGHKKIYGKQSMVDEVSGKVLEMDISKKKALQQKDIHKKIKQNESATDEINHQSLIQSKKKVHKPKKDGETKDVEHSREQILPPQDLSHYIKDKTRQTIPRIRNYYFCSLPRKYRQINSQVRRRPHLGRRYAINLDVQKEAINLLKNYQTLNEAIMHQYPNFKEEAQWVRKYFREEQKRMNLSPAKQFNIYKKDFGKMTANSVSVATCEQLTYYSKSVGFMQWDNNGNTGNATCFVFNGGYIFTCRHVVHLMVGKNTHPSLWPDIISKCAKVTFTYTEFCPTPDNWFSIEPWLKVSNENLDYAILKLKENGNAFPPGLWRQISPQPSTGLIYLIGHPEGQIKKIDGCTVIPLNERLKKYPNDCQDGLVDLYDTTSNVYCMFTQRSFLSEVWNTHTLSYDTCFSDGSSGSPVFNASGKLVALHTFGLFYQRGFNVHALIEFGYSMDSILCDIKKTNESLYKSLNDEKLETYDEEKGKQESSLQDHQIEPMEC.

Methionine 1 bears the N-acetylmethionine mark. Basic and acidic residues-rich tracts occupy residues methionine 1 to lysine 10 and aspartate 17 to lysine 32. The segment at methionine 1 to lysine 32 is disordered. Residue lysine 284 forms a Glycyl lysine isopeptide (Lys-Gly) (interchain with G-Cter in SUMO2) linkage. Residues glutamine 285–arginine 321 are disordered. Over residues lysine 310–arginine 321 the composition is skewed to basic and acidic residues. Active-site charge relay system residues include histidine 490, aspartate 544, and serine 650. Residues threonine 712–cysteine 734 are disordered.

Belongs to the FAM111 family. As to expression, widely expressed.

Functionally, serine protease. The chain is Serine protease FAM111B from Homo sapiens (Human).